The primary structure comprises 341 residues: Phosphate acyltransferase (341 aa).

It belongs to the PlsX family. As to quaternary structure, homodimer. Probably interacts with PlsY.

It is found in the cytoplasm. It catalyses the reaction a fatty acyl-[ACP] + phosphate = an acyl phosphate + holo-[ACP]. It participates in lipid metabolism; phospholipid metabolism. In terms of biological role, catalyzes the reversible formation of acyl-phosphate (acyl-PO(4)) from acyl-[acyl-carrier-protein] (acyl-ACP). This enzyme utilizes acyl-ACP as fatty acyl donor, but not acyl-CoA. This chain is Phosphate acyltransferase, found in Idiomarina loihiensis (strain ATCC BAA-735 / DSM 15497 / L2-TR).